The primary structure comprises 205 residues: DNA-directed RNA polymerase RPB5 homolog (205 aa).

It belongs to the archaeal RpoH/eukaryotic RPB5 RNA polymerase subunit family. Part of the viral DNA-directed RNA polymerase that consists of 8 polII-like subunits (RPB1, RPB2, RPB3, RPB5, RPB6, RPB7, RPB9, RPB10), a capping enzyme and a termination factor.

The protein localises to the host cytoplasm. Its subcellular location is the virion. Its function is as follows. Component of the DNA-directed RNA polymerase (RNAP) that catalyzes the transcription in the cytoplasm of viral DNA into RNA using the four ribonucleoside triphosphates as substrates. This is DNA-directed RNA polymerase RPB5 homolog from Ornithodoros (relapsing fever ticks).